Here is a 447-residue protein sequence, read N- to C-terminus: Ribosomal protein uS12 methylthiotransferase RimO (447 aa).

Residues 6–122 (EKVSMVSLGC…IAEIIEEKSS (117 aa)) enclose the MTTase N-terminal domain. The [4Fe-4S] cluster site is built by cysteine 15, cysteine 51, cysteine 85, cysteine 160, cysteine 164, and cysteine 167. Residues 146–376 (SSPAYTAYLK…MKAQARVSFK (231 aa)) form the Radical SAM core domain. One can recognise a TRAM domain in the interval 379 to 447 (RRLIDTEEQV…DYDLIGEIIS (69 aa)).

Belongs to the methylthiotransferase family. RimO subfamily. [4Fe-4S] cluster is required as a cofactor.

The protein localises to the cytoplasm. It catalyses the reaction L-aspartate(89)-[ribosomal protein uS12]-hydrogen + (sulfur carrier)-SH + AH2 + 2 S-adenosyl-L-methionine = 3-methylsulfanyl-L-aspartate(89)-[ribosomal protein uS12]-hydrogen + (sulfur carrier)-H + 5'-deoxyadenosine + L-methionine + A + S-adenosyl-L-homocysteine + 2 H(+). Catalyzes the methylthiolation of an aspartic acid residue of ribosomal protein uS12. In Geobacter sulfurreducens (strain ATCC 51573 / DSM 12127 / PCA), this protein is Ribosomal protein uS12 methylthiotransferase RimO.